A 220-amino-acid chain; its full sequence is Metalloproteinase inhibitor 2 (220 aa).

Residues 1–26 (MGATARSLRLALGLLLLGTLPRGADA) form the signal peptide. Residue C27 participates in Zn(2+) binding. 2 involved in metalloproteinase-binding regions span residues 27–30 (CSCS) and 95–96 (SA). Cystine bridges form between C27–C98, C29–C127, C39–C152, C154–C201, C159–C164, and C172–C193. Residues 27–152 (CSCSPVHPQQ…SLNHRYQMGC (126 aa)) form the NTR domain.

It belongs to the protease inhibitor I35 (TIMP) family. In terms of assembly, interacts (via the C-terminal) with MMP2 (via the C-terminal PEX domain); the interaction inhibits the MMP2 activity. Post-translationally, the activity of TIMP2 is dependent on the presence of disulfide bonds. In terms of tissue distribution, predominantly expressed in the lung in alveolar macrophages and epithelial cells. Also found in brain, kidney, intestine, spleen and heart.

It localises to the secreted. Complexes with metalloproteinases (such as collagenases) and irreversibly inactivates them by binding to their catalytic zinc cofactor. The polypeptide is Metalloproteinase inhibitor 2 (TIMP2) (Cavia porcellus (Guinea pig)).